The primary structure comprises 136 residues: UPF0310 protein HH_1062 (136 aa).

It belongs to the UPF0310 family.

The sequence is that of UPF0310 protein HH_1062 from Helicobacter hepaticus (strain ATCC 51449 / 3B1).